We begin with the raw amino-acid sequence, 331 residues long: Glycerol-3-phosphate dehydrogenase [NAD(P)+] (331 aa).

Residues serine 11, phenylalanine 12, arginine 32, and lysine 106 each coordinate NADPH. Positions 106, 134, and 136 each coordinate sn-glycerol 3-phosphate. Alanine 138 contributes to the NADPH binding site. Sn-glycerol 3-phosphate is bound by residues lysine 189, aspartate 242, serine 252, arginine 253, and asparagine 254. Lysine 189 serves as the catalytic Proton acceptor. An NADPH-binding site is contributed by arginine 253. NADPH is bound by residues valine 277 and glutamate 279.

It belongs to the NAD-dependent glycerol-3-phosphate dehydrogenase family.

It localises to the cytoplasm. The enzyme catalyses sn-glycerol 3-phosphate + NAD(+) = dihydroxyacetone phosphate + NADH + H(+). The catalysed reaction is sn-glycerol 3-phosphate + NADP(+) = dihydroxyacetone phosphate + NADPH + H(+). It functions in the pathway membrane lipid metabolism; glycerophospholipid metabolism. Catalyzes the reduction of the glycolytic intermediate dihydroxyacetone phosphate (DHAP) to sn-glycerol 3-phosphate (G3P), the key precursor for phospholipid synthesis. The sequence is that of Glycerol-3-phosphate dehydrogenase [NAD(P)+] from Clostridium perfringens (strain SM101 / Type A).